Here is an 88-residue protein sequence, read N- to C-terminus: Small ribosomal subunit protein uS17 (88 aa).

This sequence belongs to the universal ribosomal protein uS17 family. In terms of assembly, part of the 30S ribosomal subunit.

Functionally, one of the primary rRNA binding proteins, it binds specifically to the 5'-end of 16S ribosomal RNA. The polypeptide is Small ribosomal subunit protein uS17 (Yersinia pseudotuberculosis serotype O:1b (strain IP 31758)).